Reading from the N-terminus, the 249-residue chain is 2,5-diamino-6-ribosylamino-4(3H)-pyrimidinone 5'-phosphate reductase (249 aa).

NADP(+) contacts are provided by residues Thr-79, Asp-83, Met-164, and 187–191 (GGIVI).

The protein belongs to the HTP reductase family. In terms of assembly, homodimer.

The enzyme catalyses 2,5-diamino-6-(1-D-ribitylamino)pyrimidin-4(3H)-one 5'-phosphate + NADP(+) = 2,5-diamino-6-(1-D-ribosylamino)pyrimidin-4(3H)-one 5'-phosphate + NADPH + H(+). It carries out the reaction 2,5-diamino-6-(1-D-ribitylamino)pyrimidin-4(3H)-one 5'-phosphate + NAD(+) = 2,5-diamino-6-(1-D-ribosylamino)pyrimidin-4(3H)-one 5'-phosphate + NADH + H(+). Its pathway is cofactor biosynthesis; riboflavin biosynthesis. Its function is as follows. Catalyzes an early step in riboflavin biosynthesis, the NADPH-dependent reduction of the ribose side chain of 2,5-diamino-6-ribosylamino-4(3H)-pyrimidinone 5'-phosphate, yielding 2,5-diamino-6-ribitylamino-4(3H)-pyrimidinone 5'-phosphate. The polypeptide is 2,5-diamino-6-ribosylamino-4(3H)-pyrimidinone 5'-phosphate reductase (RIB7) (Kluyveromyces marxianus (Yeast)).